The primary structure comprises 436 residues: Probable G-protein coupled receptor C06G4.5 (436 aa).

Topologically, residues 1-53 are extracellular; that stretch reads MSTNLVDYVDDSYLNQSMNSENGLDSVTQIMYDMKKYNIVNDVLPPPNHEDLH. A glycan (N-linked (GlcNAc...) asparagine) is linked at Asn15. A helical membrane pass occupies residues 54 to 74; sequence VVIMAVSYLLLFLLGTCGNVA. Over 75-94 the chain is Cytoplasmic; the sequence is VLTTIYHVIRSSRATLDNTL. The helical transmembrane segment at 95-115 threads the bilayer; sequence IYVIVLSCVDFGVCLSLPITV. Topologically, residues 116-132 are extracellular; it reads IDQILGFWMFGKIPCKL. A helical transmembrane segment spans residues 133–153; the sequence is HAVFENFGKILSALILTAMSF. Topologically, residues 154–171 are cytoplasmic; the sequence is DRYAGVCHPQRKRLRSRN. Residues 172–192 form a helical membrane-spanning segment; it reads FAITILLVLAVYAFITLCPLL. Topologically, residues 193-230 are extracellular; it reads WSFTAREIILYAKETAPGMLTRMKIEKCTVDIDSQMFT. A helical membrane pass occupies residues 231 to 251; that stretch reads AFTIYQFILCYCTPLVLIAFF. The Cytoplasmic portion of the chain corresponds to 252-281; that stretch reads YTKLLSKLREHTRTFKSSQIPFLHISLYTL. Residues 282–302 form a helical membrane-spanning segment; it reads AVACFYFLCWTPFWMATLFAV. Residues 303–316 are Extracellular-facing; the sequence is YLENSANSSSVPPV. An N-linked (GlcNAc...) asparagine glycan is attached at Asn309. The chain crosses the membrane as a helical span at residues 317–337; sequence FVYIMYFIHALPFTNSAINWI. Residues 338 to 436 lie on the Cytoplasmic side of the membrane; the sequence is LYGALNGQLQ…LLSNHNPTFL (99 aa).

It belongs to the G-protein coupled receptor 1 family.

Its subcellular location is the cell membrane. Functionally, putative receptor. The sequence is that of Probable G-protein coupled receptor C06G4.5 from Caenorhabditis elegans.